The primary structure comprises 818 residues: Hillarin (818 aa).

Residues 9-76 (STCLRCSETV…SSHVPKSGPG (68 aa)) enclose the LIM zinc-binding domain. The disordered stretch occupies residues 97 to 141 (FVNEQIRGTRSEVDGGPLGGSRQSTPNGYGSREISSPSQNDSDYK). Residues 117 to 137 (SRQSTPNGYGSREISSPSQND) show a composition bias toward polar residues. Positions 216–272 (QDEWERELQRLTHKFEKELATSRRSRDEANILTMRHEQQKEDLEKNMTLRRSKKKES) form a coiled coil.

It belongs to the transglutaminase-like superfamily. In terms of assembly, interacts with pnut. In terms of tissue distribution, localizes to the neuropil of the embryonic central nervous system (at protein level). Also detected in third instar larval brain (at protein level).

It is found in the cytoplasm. The protein localises to the cell cortex. The protein resides in the cleavage furrow. May act as a modulator of septin function during cytokinesis in the developing nervous system. This chain is Hillarin, found in Drosophila melanogaster (Fruit fly).